The chain runs to 236 residues: Ribose-5-phosphate isomerase A (236 aa).

Substrate-binding positions include 31–34 (TGST), 84–87 (DGAD), and 97–100 (KGGG). Glu-106 functions as the Proton acceptor in the catalytic mechanism. Residue Lys-124 participates in substrate binding.

This sequence belongs to the ribose 5-phosphate isomerase family. In terms of assembly, homodimer.

It catalyses the reaction aldehydo-D-ribose 5-phosphate = D-ribulose 5-phosphate. It functions in the pathway carbohydrate degradation; pentose phosphate pathway; D-ribose 5-phosphate from D-ribulose 5-phosphate (non-oxidative stage): step 1/1. Functionally, catalyzes the reversible conversion of ribose-5-phosphate to ribulose 5-phosphate. This is Ribose-5-phosphate isomerase A from Polynucleobacter necessarius subsp. necessarius (strain STIR1).